We begin with the raw amino-acid sequence, 303 residues long: UDP-3-O-acyl-N-acetylglucosamine deacetylase (303 aa).

His78, His237, and Asp241 together coordinate Zn(2+). His264 functions as the Proton donor in the catalytic mechanism.

Belongs to the LpxC family. Requires Zn(2+) as cofactor.

The enzyme catalyses a UDP-3-O-[(3R)-3-hydroxyacyl]-N-acetyl-alpha-D-glucosamine + H2O = a UDP-3-O-[(3R)-3-hydroxyacyl]-alpha-D-glucosamine + acetate. It participates in glycolipid biosynthesis; lipid IV(A) biosynthesis; lipid IV(A) from (3R)-3-hydroxytetradecanoyl-[acyl-carrier-protein] and UDP-N-acetyl-alpha-D-glucosamine: step 2/6. Its function is as follows. Catalyzes the hydrolysis of UDP-3-O-myristoyl-N-acetylglucosamine to form UDP-3-O-myristoylglucosamine and acetate, the committed step in lipid A biosynthesis. The sequence is that of UDP-3-O-acyl-N-acetylglucosamine deacetylase from Pseudomonas savastanoi pv. phaseolicola (strain 1448A / Race 6) (Pseudomonas syringae pv. phaseolicola (strain 1448A / Race 6)).